We begin with the raw amino-acid sequence, 306 residues long: Low density lipoprotein receptor adapter protein 1 (306 aa).

Position 1 is an N-acetylmethionine (Met1). The residue at position 14 (Ser14) is a Phosphoserine. Positions Gly44–Glu168 constitute a PID domain. A disordered region spans residues Glu178 to Ser204. Residues Ser197 and Ser200 each carry the phosphoserine modification. The Clathrin box signature appears at Leu210–Glu214. The AP-2 complex binding stretch occupies residues Trp247–Leu274. The [DE]-X(1,2)-F-X-X-[FL]-X-X-X-R motif motif lies at Glu255–Arg264.

As to quaternary structure, interacts (via PID domain) with LDLR (via NPXY motifs). Binds to soluble clathrin trimers. Interacts with AP2B1; the interaction mediates the association with the AP-2 complex. Interacts with VLDLR. Interacts with LRP2.

The protein localises to the cytoplasm. In terms of biological role, adapter protein (clathrin-associated sorting protein (CLASP)) required for efficient endocytosis of the LDL receptor (LDLR) in polarized cells such as hepatocytes and lymphocytes, but not in non-polarized cells (fibroblasts). May be required for LDL binding and internalization but not for receptor clustering in coated pits. May facilitate the endocytosis of LDLR and LDLR-LDL complexes from coated pits by stabilizing the interaction between the receptor and the structural components of the pits. May also be involved in the internalization of other LDLR family members. Binds to phosphoinositides, which regulate clathrin bud assembly at the cell surface. Required for trafficking of LRP2 to the endocytic recycling compartment which is necessary for LRP2 proteolysis, releasing a tail fragment which translocates to the nucleus and mediates transcriptional repression. This chain is Low density lipoprotein receptor adapter protein 1, found in Rattus norvegicus (Rat).